A 900-amino-acid chain; its full sequence is Nitrate reductase [NADH] (900 aa).

Residue cysteine 172 coordinates Mo-molybdopterin. The Cytochrome b5 heme-binding domain maps to 521–596; it reads TKMYSLSEVK…LEDYRVGELI (76 aa). Residues histidine 556 and histidine 579 each coordinate heme. Residues 644 to 756 form the FAD-binding FR-type domain; the sequence is REKIPCKLIS…KGPLGHIEYT (113 aa). FAD contacts are provided by residues 696–699, 713–717, phenylalanine 718, phenylalanine 725, 730–732, and threonine 783; these read RAYT, VVKVY, and AMS.

The protein belongs to the nitrate reductase family. Homodimer. It depends on FAD as a cofactor. Heme serves as cofactor. Requires Mo-molybdopterin as cofactor.

The catalysed reaction is nitrite + NAD(+) + H2O = nitrate + NADH + H(+). Nitrate reductase is a key enzyme involved in the first step of nitrate assimilation in plants, fungi and bacteria. This is Nitrate reductase [NADH] (NIA) from Lotus japonicus (Lotus corniculatus var. japonicus).